Reading from the N-terminus, the 476-residue chain is Cysteine--tRNA ligase (476 aa).

Residue Cys-29 coordinates Zn(2+). Positions 31 to 41 (PTVYDYPHLGH) match the 'HIGH' region motif. Positions 209, 234, and 238 each coordinate Zn(2+). Residues 266-270 (KMSKS) carry the 'KMSKS' region motif. Residue Lys-269 participates in ATP binding.

The protein belongs to the class-I aminoacyl-tRNA synthetase family. Requires Zn(2+) as cofactor.

The protein localises to the cytoplasm. The enzyme catalyses tRNA(Cys) + L-cysteine + ATP = L-cysteinyl-tRNA(Cys) + AMP + diphosphate. The polypeptide is Cysteine--tRNA ligase (cysS) (Pyrococcus horikoshii (strain ATCC 700860 / DSM 12428 / JCM 9974 / NBRC 100139 / OT-3)).